A 138-amino-acid polypeptide reads, in one-letter code: Large ribosomal subunit protein uL16c (138 aa).

This sequence belongs to the universal ribosomal protein uL16 family. As to quaternary structure, part of the 50S ribosomal subunit.

It is found in the plastid. The protein localises to the chloroplast. This Physcomitrium patens (Spreading-leaved earth moss) protein is Large ribosomal subunit protein uL16c.